Reading from the N-terminus, the 207-residue chain is Protein Nef (207 aa).

Gly-2 carries N-myristoyl glycine; by host lipidation. Ser-6 bears the Phosphoserine; by host mark. The acidic; interacts with host PACS1 and PACS2; stabilizes the interaction of NEF/MHC-I with host AP1M1; necessary for MHC-I internalization stretch occupies residues 62 to 66 (EEDSD). An SH3-binding; interaction with Src family tyrosine kinases region spans residues 70 to 79 (PVRPQVPLRP). The PxxP; stabilizes the interaction of NEF/MHC-I with host AP1M1; necessary for MHC-I internalization signature appears at 73 to 76 (PQVP). The interval 109 to 125 (DILDLWVYNTQGFFPDW) is mediates dimerization, Nef-PTE1 interaction. The tract at residues 149–181 (MDPAEIEEANKGENISLLHPICQHGMEDEDREV) is binding to ATP6V1H. Positions 165–166 (LL) match the Dileucine internalization motif; necessary for CD4 internalization motif. The Diacidic; necessary for CD4 internalization signature appears at 175–176 (ED).

The protein belongs to the lentivirus primate group Nef protein family. Monomer; cytosolic form. Homodimer; membrane bound form. Interacts with Nef associated p21-activated kinase (PAK2); this interaction activates PAK2. Associates with the Nef-MHC-I-AP1 complex; this complex is required for MHC-I internalization. Interacts (via C-terminus) with host PI3-kinase. Interacts with host PACS1; this interaction seems to be weak. Interacts with host PACS2. Interacts with host LCK and MAPK3; these interactions inhibit the kinase activity of the latter. Interacts with host ATP6V1H; this interaction may play a role in CD4 endocytosis. Associates with the CD4-Nef-AP2 complex; this complex is required for CD4 internalization. Interacts with host AP2 subunit alpha and AP2 subunit sigma2. Interacts with TCR-zeta chain; this interaction up-regulates the Fas ligand (FasL) surface expression. Interacts with host HCK, LYN, and SRC; these interactions activate the Src family kinases. Interacts with MAP3K5; this interaction inhibits the Fas and TNFR-mediated death signals. Interacts with beta-COP and PTE1. Interacts with human RACK1; this increases Nef phosphorylation by PKC. Interacts with TP53; this interaction decreases the half-life of TP53, protecting the infected cell against p53-mediated apoptosis. In terms of processing, the virion-associated Nef proteins are cleaved by the viral protease to release the soluble C-terminal core protein. Nef is probably cleaved concomitantly with viral structural proteins on maturation of virus particles. Myristoylated. Post-translationally, phosphorylated on serine residues, probably by host PKCdelta and theta.

Its subcellular location is the host cell membrane. It localises to the virion. The protein resides in the secreted. It is found in the host Golgi apparatus membrane. Factor of infectivity and pathogenicity, required for optimal virus replication. Alters numerous pathways of T-lymphocyte function and down-regulates immunity surface molecules in order to evade host defense and increase viral infectivity. Alters the functionality of other immunity cells, like dendritic cells, monocytes/macrophages and NK cells. In terms of biological role, in infected CD4(+) T-lymphocytes, down-regulates the surface MHC-I, mature MHC-II, CD4, CD28, CCR5 and CXCR4 molecules. Mediates internalization and degradation of host CD4 through the interaction of with the cytoplasmic tail of CD4, the recruitment of AP-2 (clathrin adapter protein complex 2), internalization through clathrin coated pits, and subsequent transport to endosomes and lysosomes for degradation. Diverts host MHC-I molecules to the trans-Golgi network-associated endosomal compartments by an endocytic pathway to finally target them for degradation. MHC-I down-regulation may involve AP-1 (clathrin adapter protein complex 1) or possibly Src family kinase-ZAP70/Syk-PI3K cascade recruited by PACS2. In consequence infected cells are masked for immune recognition by cytotoxic T-lymphocytes. Decreasing the number of immune receptors also prevents reinfection by more HIV particles (superinfection). Down-regulates host SERINC3 and SERINC5 thereby excluding these proteins from the viral particles. Virion infectivity is drastically higher when SERINC3 or SERINC5 are excluded from the viral envelope, because these host antiviral proteins impair the membrane fusion event necessary for subsequent virion penetration. Its function is as follows. Bypasses host T-cell signaling by inducing a transcriptional program nearly identical to that of anti-CD3 cell activation. Interaction with TCR-zeta chain up-regulates the Fas ligand (FasL). Increasing surface FasL molecules and decreasing surface MHC-I molecules on infected CD4(+) cells send attacking cytotoxic CD8+ T-lymphocytes into apoptosis. Functionally, plays a role in optimizing the host cell environment for viral replication without causing cell death by apoptosis. Protects the infected cells from apoptosis in order to keep them alive until the next virus generation is ready to strike. Inhibits the Fas and TNFR-mediated death signals by blocking MAP3K5/ASK1. Decreases the half-life of TP53, protecting the infected cell against p53-mediated apoptosis. Inhibits the apoptotic signals regulated by the Bcl-2 family proteins through the formation of a Nef/PI3-kinase/PAK2 complex that leads to activation of PAK2 and induces phosphorylation of host BAD. Extracellular Nef protein targets CD4(+) T-lymphocytes for apoptosis by interacting with CXCR4 surface receptors. The chain is Protein Nef from Homo sapiens (Human).